The primary structure comprises 391 residues: Glycosyltransferase afumC (391 aa).

Belongs to the afumC glycosyltransferase family.

The protein operates within secondary metabolite biosynthesis. With respect to regulation, activity is significantly decreased by addition of divalent cations such as Mg(2+), Mn(2+), Zn(2+), Ca(2+), Co(2+), Cu(2+), and Ni(2+); while Fe(2+) has little effect. Functionally, glycosyltransferase; part of the gene cluster that mediates the biosynthesis fumihopaside A, a hopane-type glucoside that enhances the thermotolerance and UV resistance of N.fumigata. The first step of fumihopaside A biosynthesis is performed by the squalene hopane cyclase afumA that catalyzes the cyclization of 3S-oxidosqualene into the hopene 21-beta-H-hopane-3-beta,22-diol. The cytochrome P450 monooxygenase afumB is responsible for both hydroxylation at C-24 and oxidations at C-30 of the afumA product. The glycosyltransferase afumC then catalyzes the glycosylation at C-24, using UDP-D-glucose as a donor, to produce fumihopaside A. AfumC is also able to accept UDP-D-galactose and UDP-D-glucuronic acid as donors to yield minor derivatives. Fumihopaside B, another minor derivative produced, is different from fumihopaside A due to the presence of a double bond between C-22 and C-29. The chain is Glycosyltransferase afumC from Aspergillus fumigatus (strain CBS 144.89 / FGSC A1163 / CEA10) (Neosartorya fumigata).